An 84-amino-acid polypeptide reads, in one-letter code: Small ribosomal subunit protein bS18A (84 aa).

This sequence belongs to the bacterial ribosomal protein bS18 family. In terms of assembly, part of the 30S ribosomal subunit. Forms a tight heterodimer with protein bS6.

In terms of biological role, binds as a heterodimer with protein bS6 to the central domain of the 16S rRNA, where it helps stabilize the platform of the 30S subunit. The sequence is that of Small ribosomal subunit protein bS18A from Mycobacterium marinum (strain ATCC BAA-535 / M).